The primary structure comprises 429 residues: Glutamate-1-semialdehyde 2,1-aminomutase (429 aa).

An N6-(pyridoxal phosphate)lysine modification is found at Lys268.

The protein belongs to the class-III pyridoxal-phosphate-dependent aminotransferase family. HemL subfamily. As to quaternary structure, homodimer. Pyridoxal 5'-phosphate is required as a cofactor.

The protein localises to the cytoplasm. The catalysed reaction is (S)-4-amino-5-oxopentanoate = 5-aminolevulinate. Its pathway is porphyrin-containing compound metabolism; protoporphyrin-IX biosynthesis; 5-aminolevulinate from L-glutamyl-tRNA(Glu): step 2/2. The polypeptide is Glutamate-1-semialdehyde 2,1-aminomutase (Serratia proteamaculans (strain 568)).